The following is an 882-amino-acid chain: Holliday junction resolvase MOC1, chloroplastic (882 aa).

Disordered stretches follow at residues 87–148 (IRDG…QTPT) and 323–351 (TPAA…PRAA). Polar residues predominate over residues 91–111 (PNSNSRCSTVRTHATRSKSTG). The segment covering 112–125 (PSRATSSGPATAAP) has biased composition (low complexity). Positions 134-148 (NDTQDGGLTSEQTPT) are enriched in polar residues. Residues 323-337 (TPAAASQTPPTTVTS) show a composition bias toward low complexity. Asp397, Glu552, Asn629, and Asp634 together coordinate Mg(2+). Residues 710 to 882 (KVERKAQARS…DGGVSGSESE (173 aa)) form a disordered region. Residues 732 to 743 (EEPEAQAEEEQA) are compositionally biased toward acidic residues. Composition is skewed to low complexity over residues 744-758 (EAGT…GAAA), 769-783 (VESG…VAAG), 810-819 (SGKSSSKAEA), and 830-844 (ASVG…SVGS). Gly residues-rich tracts occupy residues 845-857 (SSGG…GGVK) and 868-882 (AKAG…SESE).

Requires Mg(2+) as cofactor. Mn(2+) is required as a cofactor.

Its subcellular location is the plastid. It is found in the chloroplast. It carries out the reaction Endonucleolytic cleavage at a junction such as a reciprocal single-stranded crossover between two homologous DNA duplexes (Holliday junction).. In terms of biological role, a structure-specific endonuclease that resolves Holliday junction (HJ) intermediates during genetic recombination. Cleaves 4-way DNA junctions introducing paired nicks in opposing strands, leaving a 5'-terminal phosphate and a 3'-terminal hydroxyl group that are ligated to produce recombinant products. Mediates chloroplast nucleoid segregation during chloroplast division. The chain is Holliday junction resolvase MOC1, chloroplastic from Chlamydomonas reinhardtii (Chlamydomonas smithii).